A 180-amino-acid polypeptide reads, in one-letter code: Shikimate kinase (180 aa).

14–19 (GAGKTC) is a binding site for ATP. Thr18 is a binding site for Mg(2+). Substrate-binding residues include Asp36, Arg60, and Gly82. ATP is bound at residue Arg120. Arg139 is a substrate binding site.

The protein belongs to the shikimate kinase family. Monomer. Mg(2+) serves as cofactor.

Its subcellular location is the cytoplasm. It carries out the reaction shikimate + ATP = 3-phosphoshikimate + ADP + H(+). It participates in metabolic intermediate biosynthesis; chorismate biosynthesis; chorismate from D-erythrose 4-phosphate and phosphoenolpyruvate: step 5/7. Functionally, catalyzes the specific phosphorylation of the 3-hydroxyl group of shikimic acid using ATP as a cosubstrate. This Stenotrophomonas maltophilia (strain R551-3) protein is Shikimate kinase.